The following is a 265-amino-acid chain: Phosphate import ATP-binding protein PstB (265 aa).

One can recognise an ABC transporter domain in the interval 18-260 (ISARDVQVFY…PEDPRTESYI (243 aa)). 50–57 (GPSGCGKS) is a binding site for ATP.

It belongs to the ABC transporter superfamily. Phosphate importer (TC 3.A.1.7) family. In terms of assembly, the complex is composed of two ATP-binding proteins (PstB), two transmembrane proteins (PstC and PstA) and a solute-binding protein (PstS).

It localises to the cell inner membrane. It catalyses the reaction phosphate(out) + ATP + H2O = ADP + 2 phosphate(in) + H(+). In terms of biological role, part of the ABC transporter complex PstSACB involved in phosphate import. Responsible for energy coupling to the transport system. In Roseobacter denitrificans (strain ATCC 33942 / OCh 114) (Erythrobacter sp. (strain OCh 114)), this protein is Phosphate import ATP-binding protein PstB.